The sequence spans 95 residues: MSLTLEQVKRIAHLARIEISDDEALTTQGHLNGIFQLIEQMQAVDTTGIEPMAHAQDVSQRLREDAVSEGDRRAAYQAVAPEIEAGLYLVPKVIE.

The protein belongs to the GatC family. In terms of assembly, heterotrimer of A, B and C subunits.

The catalysed reaction is L-glutamyl-tRNA(Gln) + L-glutamine + ATP + H2O = L-glutaminyl-tRNA(Gln) + L-glutamate + ADP + phosphate + H(+). It carries out the reaction L-aspartyl-tRNA(Asn) + L-glutamine + ATP + H2O = L-asparaginyl-tRNA(Asn) + L-glutamate + ADP + phosphate + 2 H(+). Functionally, allows the formation of correctly charged Asn-tRNA(Asn) or Gln-tRNA(Gln) through the transamidation of misacylated Asp-tRNA(Asn) or Glu-tRNA(Gln) in organisms which lack either or both of asparaginyl-tRNA or glutaminyl-tRNA synthetases. The reaction takes place in the presence of glutamine and ATP through an activated phospho-Asp-tRNA(Asn) or phospho-Glu-tRNA(Gln). The chain is Aspartyl/glutamyl-tRNA(Asn/Gln) amidotransferase subunit C from Dechloromonas aromatica (strain RCB).